A 271-amino-acid chain; its full sequence is Orotidine 5'-phosphate decarboxylase (271 aa).

The Proton donor role is filled by Lys-95.

This sequence belongs to the OMP decarboxylase family. Type 2 subfamily.

The catalysed reaction is orotidine 5'-phosphate + H(+) = UMP + CO2. It functions in the pathway pyrimidine metabolism; UMP biosynthesis via de novo pathway; UMP from orotate: step 2/2. The chain is Orotidine 5'-phosphate decarboxylase from Ralstonia pickettii (strain 12J).